The sequence spans 277 residues: 2-dehydro-3-deoxyphosphooctonate aldolase (277 aa).

It belongs to the KdsA family.

The protein resides in the cytoplasm. The enzyme catalyses D-arabinose 5-phosphate + phosphoenolpyruvate + H2O = 3-deoxy-alpha-D-manno-2-octulosonate-8-phosphate + phosphate. Its pathway is carbohydrate biosynthesis; 3-deoxy-D-manno-octulosonate biosynthesis; 3-deoxy-D-manno-octulosonate from D-ribulose 5-phosphate: step 2/3. It participates in bacterial outer membrane biogenesis; lipopolysaccharide biosynthesis. This is 2-dehydro-3-deoxyphosphooctonate aldolase from Brucella anthropi (strain ATCC 49188 / DSM 6882 / CCUG 24695 / JCM 21032 / LMG 3331 / NBRC 15819 / NCTC 12168 / Alc 37) (Ochrobactrum anthropi).